We begin with the raw amino-acid sequence, 881 residues long: Alanine--tRNA ligase (881 aa).

Zn(2+) is bound by residues His564, His568, Cys673, and His677. The disordered stretch occupies residues 848 to 867; that stretch reads GQGGGGRPDMAQAGGPDGDK.

The protein belongs to the class-II aminoacyl-tRNA synthetase family. It depends on Zn(2+) as a cofactor.

It localises to the cytoplasm. The catalysed reaction is tRNA(Ala) + L-alanine + ATP = L-alanyl-tRNA(Ala) + AMP + diphosphate. In terms of biological role, catalyzes the attachment of alanine to tRNA(Ala) in a two-step reaction: alanine is first activated by ATP to form Ala-AMP and then transferred to the acceptor end of tRNA(Ala). Also edits incorrectly charged Ser-tRNA(Ala) and Gly-tRNA(Ala) via its editing domain. This is Alanine--tRNA ligase from Hyphomonas neptunium (strain ATCC 15444).